The sequence spans 416 residues: Squamosa promoter-binding-like protein 8 (416 aa).

Residues 11–53 are disordered; it reads SSCDDFGYNATPPPPPSLLPIMDQDGGGGSIQRDHHHHHNHQQ. An SBP-type zinc finger spans residues 182 to 260; that stretch reads PPRCQAEGCK…ADHNRRRRKS (79 aa). Cys185, Cys190, Cys207, His210, Cys227, Cys230, His234, and Cys246 together coordinate Zn(2+). Residues 243-259 carry the Bipartite nuclear localization signal motif; that stretch reads KKSCRKRLADHNRRRRK. The segment at 250-299 is disordered; the sequence is LADHNRRRRKSKPSDGEHSGEKRRAQANKSAATKDKAGSSSKNAGIGDGF. The segment covering 261–273 has biased composition (basic and acidic residues); sequence KPSDGEHSGEKRR.

Expressed in stems, leaf sheaths, and young panicles.

It localises to the nucleus. Probable transcription factor that plays an important role in building the laminar joint between leaf blade and leaf sheath boundary, thereby controlling ligule and auricle development. In Oryza sativa subsp. indica (Rice), this protein is Squamosa promoter-binding-like protein 8 (SPL8).